A 426-amino-acid polypeptide reads, in one-letter code: Elongation factor Tu, mitochondrial (426 aa).

Residues 1–27 constitute a mitochondrion transit peptide; it reads MFKNLAGSFRAVSRVAFKTRPSLVRSY. A tr-type G domain is found at 34–230; the sequence is KPHVNIGTIG…AVDEHIPTPT (197 aa). The tract at residues 43–50 is G1; it reads GHVDHGKT. Position 43-50 (43-50) interacts with GTP; it reads GHVDHGKT. A G2 region spans residues 84-88; the sequence is GITIS. A G3 region spans residues 105-108; it reads DCPG. GTP contacts are provided by residues 105 to 109 and 160 to 163; these read DCPGH and NKVD. A G4 region spans residues 160-163; the sequence is NKVD. Positions 198–200 are G5; sequence SAL.

This sequence belongs to the TRAFAC class translation factor GTPase superfamily. Classic translation factor GTPase family. EF-Tu/EF-1A subfamily.

It is found in the mitochondrion. It participates in protein biosynthesis; polypeptide chain elongation. Functionally, G-protein that, in its active GTP-bound form, binds to and delivers aminoacyl-tRNA to the A-site of ribosomes during protein biosynthesis. In the presence of a correct codon-anticodon match between the aminoacyl-tRNA and the A-site codon of the ribosome-bound mRNA, the ribosome acts as a GTPase activator and the GTP is hydrolyzed. The inactive GDP-bound form leaves the ribosome and must be recycled before binding another molecule of aminoacyl-tRNA. Required for mitochondrial protein biosynthesis and maintenance of mitochondrial DNA. The polypeptide is Elongation factor Tu, mitochondrial (TUF1) (Meyerozyma guilliermondii (strain ATCC 6260 / CBS 566 / DSM 6381 / JCM 1539 / NBRC 10279 / NRRL Y-324) (Yeast)).